We begin with the raw amino-acid sequence, 246 residues long: Probable transcriptional regulatory protein CA_C2295 (246 aa).

The protein belongs to the TACO1 family.

The protein resides in the cytoplasm. The protein is Probable transcriptional regulatory protein CA_C2295 of Clostridium acetobutylicum (strain ATCC 824 / DSM 792 / JCM 1419 / IAM 19013 / LMG 5710 / NBRC 13948 / NRRL B-527 / VKM B-1787 / 2291 / W).